Consider the following 940-residue polypeptide: Translation initiation factor IF-2 (940 aa).

Low complexity-rich tracts occupy residues 138–147 (APVEVVAEPE) and 161–208 (PVVV…ITEL). The tract at residues 138–354 (APVEVVAEPE…DRQTFQAPTE (217 aa)) is disordered. 2 stretches are compositionally biased toward basic and acidic residues: residues 214 to 271 (IAAR…EEAA) and 289 to 311 (AKAD…DGAK). The 170-residue stretch at 440–609 (PRAPVVTVMG…LLQAEVLELT (170 aa)) folds into the tr-type G domain. The tract at residues 449–456 (GHVDHGKT) is G1. Position 449–456 (449–456 (GHVDHGKT)) interacts with GTP. The tract at residues 474–478 (GITQH) is G2. The G3 stretch occupies residues 495-498 (DTPG). GTP is bound by residues 495-499 (DTPGH) and 549-552 (TKID). The interval 549–552 (TKID) is G4. The segment at 585-587 (SAK) is G5.

It belongs to the TRAFAC class translation factor GTPase superfamily. Classic translation factor GTPase family. IF-2 subfamily.

It localises to the cytoplasm. Functionally, one of the essential components for the initiation of protein synthesis. Protects formylmethionyl-tRNA from spontaneous hydrolysis and promotes its binding to the 30S ribosomal subunits. Also involved in the hydrolysis of GTP during the formation of the 70S ribosomal complex. The protein is Translation initiation factor IF-2 of Azoarcus sp. (strain BH72).